The primary structure comprises 520 residues: Putative cytochrome P450 CYP13A4 (520 aa).

Cys-464 contacts heme.

It belongs to the cytochrome P450 family. Requires heme as cofactor.

Functionally, cytochromes P450 are a group of heme-thiolate monooxygenases. They oxidize a variety of structurally unrelated compounds, including steroids, fatty acids, and xenobiotics. The protein is Putative cytochrome P450 CYP13A4 (cyp-13A4) of Caenorhabditis elegans.